The sequence spans 314 residues: Ribosomal protein uL3 glutamine methyltransferase (314 aa).

This sequence belongs to the protein N5-glutamine methyltransferase family. PrmB subfamily.

The enzyme catalyses L-glutaminyl-[ribosomal protein uL3] + S-adenosyl-L-methionine = N(5)-methyl-L-glutaminyl-[ribosomal protein uL3] + S-adenosyl-L-homocysteine + H(+). In terms of biological role, methylates large ribosomal subunit protein uL3 on a specific glutamine residue. This chain is Ribosomal protein uL3 glutamine methyltransferase, found in Haemophilus influenzae (strain ATCC 51907 / DSM 11121 / KW20 / Rd).